Consider the following 367-residue polypeptide: Probable 7-methylxanthine methyltransferase 2 (367 aa).

Y20 is an S-adenosyl-L-homocysteine binding site. Position 27 (T27) interacts with theobromine. C64, Q69, D101, L102, S134, and F135 together coordinate S-adenosyl-L-homocysteine. 3 residues coordinate theobromine: Y152, H155, and W156. Residues N172, D258, F260, and N261 each contribute to the Mg(2+) site. F313 serves as a coordination point for theobromine.

This sequence belongs to the methyltransferase superfamily. Type-7 methyltransferase family. Requires Mg(2+) as cofactor.

It catalyses the reaction 7-methylxanthine + S-adenosyl-L-methionine = theobromine + S-adenosyl-L-homocysteine + H(+). It functions in the pathway alkaloid biosynthesis. Its function is as follows. Involved in the biosynthesis of theobromine. The polypeptide is Probable 7-methylxanthine methyltransferase 2 (Theobroma cacao (Cacao)).